The chain runs to 865 residues: MFSVPGVSGILNRGGGHKIKGTVVLMRKNVLDFNSVADLTKGNVGGLIGTGLNVVGSTLDNLTAFLGRSVALQLISATKPLANGKGKVGKDTFLEGIIVSLPTLGAGESAFNIQFEWDESMGIPGAFYIKNYMQVEFYLKSLTLEDVPNQGTIRFVCNSWVYNTKLYKSVRIFFANHTYVPSETPAALVGYREEELKNLRGDGKGERKEHDRIYDYDVYNDLGNPDHGENFARPILGGSSTHPYPRRGRTGRYPTRKDQNSEKPGEVYVPRDENFGHLKSSDFLAYGIKSLSQYVLPAFESVFDLNFTPNEFDSFQDVRDLHEGGIKLPTEVISTIMPLPVVKELFRTDGEQVLKFPPPHVIQVSKSAWMTDEEFAREMVAGVNPCVIRGLQEFPPKSNLDPTIYGEQTSKITADALDLDGYTVDEALASRRLFMLDYHDVFMPYIRRINQTYAKAYATRTILFLRENGTLKPVAIELSLPHPAGDLSGAVSQVILPAKEGVESTIWLLAKAYVVVNDSCYHQLMSHWLNTHAVIEPFIIATNRHLSALHPIYKLLTPHYRDTMNINALARQSLINADGIIEKSFLPSKHSVEMSSAVYKNWVFTDQALPADLIKRGVAIKDPSAPHGLRLLIEDYPYAVDGLEIWAAIKTWVQEYVSLYYARDDDVKPDSELQQWWKEAVEKGHGDLKDKPWWPKLQTIEELVEICTIIIWTASALHAAVNFGQYPYGGFILNRPTSSRRLLPEKGTPEYEEMVKSHQKAYLRTITSKFQTLVDLSVIEILSRHASDEVYLGQRDNPHWTSDSKALQAFQKFGNKLKEIEEKLARKNNDQSLSNRLGPVQLPYTLLHPNSEGLTCRGIPNSISI.

The region spanning 50–175 (TGLNVVGSTL…LYKSVRIFFA (126 aa)) is the PLAT domain. Positions 178-865 (TYVPSETPAA…CRGIPNSISI (688 aa)) constitute a Lipoxygenase domain. The tract at residues 234-265 (PILGGSSTHPYPRRGRTGRYPTRKDQNSEKPG) is disordered. The segment covering 255–265 (TRKDQNSEKPG) has biased composition (basic and acidic residues). Residues His-527, His-532, His-718, Asn-722, and Ile-865 each coordinate Fe cation.

The protein belongs to the lipoxygenase family. In terms of assembly, monomer. Fe cation is required as a cofactor.

The protein resides in the cytoplasm. The enzyme catalyses (9Z,12Z)-octadecadienoate + O2 = (9S)-hydroperoxy-(10E,12Z)-octadecadienoate. Its pathway is lipid metabolism; oxylipin biosynthesis. Its function is as follows. Plant lipoxygenase may be involved in a number of diverse aspects of plant physiology including growth and development, pest resistance, and senescence or responses to wounding. It catalyzes the hydroperoxidation of lipids containing a cis,cis-1,4-pentadiene structure. The polypeptide is Seed linoleate 9S-lipoxygenase-2 (LOX1.2) (Glycine max (Soybean)).